Consider the following 775-residue polypeptide: Subtilisin-like protease SBT1.2 (775 aa).

The first 20 residues, 1 to 20 (MEPKPFFLCIIFLLFCSSSS), serve as a signal peptide directing secretion. The region spanning 27–111 (TYIVQLHPNS…AVRPDHVLQV (85 aa)) is the Inhibitor I9 domain. One can recognise a Peptidase S8 domain in the interval 116 to 618 (SYKFLGLDGF…AGHVNPQKAI (503 aa)). Active-site charge relay system residues include aspartate 146 and histidine 222. In terms of domain architecture, PA spans 388 to 470 (GGDKGSEFCL…YTESVLLKAY (83 aa)). Asparagine 472 and asparagine 544 each carry an N-linked (GlcNAc...) asparagine glycan. Catalysis depends on serine 552, which acts as the Charge relay system. The N-linked (GlcNAc...) asparagine glycan is linked to asparagine 652.

Belongs to the peptidase S8 family. As to expression, mostly expressed in leaves and cotyledons (especially in epidermal cells), and, to a lower extent, in floral buds, stems, and siliques. Strongly expressed in stomatal precursor cells (meristemoids and guard mother cells).

It localises to the secreted. It is found in the extracellular space. The protein resides in the apoplast. Its subcellular location is the cell membrane. In terms of biological role, serine protease involved in the negative regulation of stomatal density and distribution. Not active on EPFL6 (AC Q1PEY6). Positive regulator of water use efficiency (WUE). In Arabidopsis thaliana (Mouse-ear cress), this protein is Subtilisin-like protease SBT1.2.